We begin with the raw amino-acid sequence, 323 residues long: Fatty acid desaturase 4, chloroplastic (323 aa).

Residues 1 to 77 constitute a chloroplast transit peptide; that stretch reads MAVSLPTKYP…PRPNREKLVV (77 aa). A run of 2 helical transmembrane segments spans residues 101–121 and 131–151; these read WVAA…IGGF and LAGY…HWAI. The short motif at 170 to 173 is the Histidine box-1 element; the sequence is QGHH. A helical transmembrane segment spans residues 204-224; sequence LAFNDPVFHGFVCTFAFCILF. Residues 229-233 carry the Histidine box-2 motif; the sequence is HAWAH. The Histidine box-3 signature appears at 258–262; that stretch reads HAEHH.

Belongs to the fatty acid desaturase CarF family. Requires Fe(2+) as cofactor.

It localises to the plastid. The protein resides in the chloroplast membrane. The enzyme catalyses a 1-acyl-2-hexadecanoyl-glycerolipid + 2 reduced [2Fe-2S]-[ferredoxin] + O2 + 2 H(+) = a 1-acyl-2-[(3E)-hexadec-3-enoyl]-glycerolipid + 2 oxidized [2Fe-2S]-[ferredoxin] + 2 H2O. It functions in the pathway lipid metabolism; fatty acid metabolism. Fatty acid desaturase involved in the production of chloroplast-specific phosphatidylglycerol molecular species containing 16:1(3E). Catalyzes the formation of a trans double bond introduced close to the carboxyl group of palmitic acid, which is specifically esterified to the sn-2 glyceryl carbon of phosphatidylglycerol. The sequence is that of Fatty acid desaturase 4, chloroplastic from Arabidopsis thaliana (Mouse-ear cress).